The following is an 87-amino-acid chain: Small ribosomal subunit protein bS20 (87 aa).

The segment at 1-28 (MANSAQARKRARQASAQRDHNMSQRSEL) is disordered. Basic and acidic residues predominate over residues 17–28 (QRDHNMSQRSEL).

This sequence belongs to the bacterial ribosomal protein bS20 family.

Binds directly to 16S ribosomal RNA. This is Small ribosomal subunit protein bS20 from Thiobacillus denitrificans (strain ATCC 25259 / T1).